The primary structure comprises 174 residues: MILTGKEILKRLGSDIKIEPYDEKLLNPNSYNLRLHEDLLVYSEFPLDMKKPNPVRTLKIPEEGLLLEPGNLYLGRTIEFTETHNLVPMLEGRSSIGRLGMFVHITAGFGDVGFKGFWTLEIQVTHPLRVYSGVQICQIFYHTVEGEISEYKSGKYQANQGIQPSLLYKDFEKK.

Residues 93–98 (RSSIGR), Asp111, 119–121 (TLE), Gln138, and Tyr151 each bind dCTP. The active-site Proton donor/acceptor is Glu121.

This sequence belongs to the dCTP deaminase family. Homotrimer.

The enzyme catalyses dCTP + 2 H2O = dUMP + NH4(+) + diphosphate. Its pathway is pyrimidine metabolism; dUMP biosynthesis; dUMP from dCTP: step 1/1. Bifunctional enzyme that catalyzes both the deamination of dCTP to dUTP and the hydrolysis of dUTP to dUMP without releasing the toxic dUTP intermediate. This Leptospira biflexa serovar Patoc (strain Patoc 1 / Ames) protein is dCTP deaminase, dUMP-forming.